Reading from the N-terminus, the 271-residue chain is Type III pantothenate kinase (271 aa).

6 to 13 (DVRNTHTV) provides a ligand contact to ATP. 109–112 (GADR) serves as a coordination point for substrate. Asp111 serves as the catalytic Proton acceptor. Residue Asp131 coordinates K(+). Ser134 lines the ATP pocket. Thr186 is a binding site for substrate.

The protein belongs to the type III pantothenate kinase family. As to quaternary structure, homodimer. It depends on NH4(+) as a cofactor. K(+) is required as a cofactor.

Its subcellular location is the cytoplasm. It catalyses the reaction (R)-pantothenate + ATP = (R)-4'-phosphopantothenate + ADP + H(+). It participates in cofactor biosynthesis; coenzyme A biosynthesis; CoA from (R)-pantothenate: step 1/5. Its function is as follows. Catalyzes the phosphorylation of pantothenate (Pan), the first step in CoA biosynthesis. The chain is Type III pantothenate kinase from Mycobacterium avium (strain 104).